The following is a 370-amino-acid chain: tRNA-specific 2-thiouridylase MnmA (370 aa).

ATP-binding positions include 10–17 (AMSGGVDS) and Met-36. Catalysis depends on Cys-111, which acts as the Nucleophile. Cys-111 and Cys-209 are oxidised to a cystine. ATP is bound at residue Gly-135. Positions 159–161 (KDQ) are interaction with tRNA. Cys-209 (cysteine persulfide intermediate) is an active-site residue.

The protein belongs to the MnmA/TRMU family.

It is found in the cytoplasm. It catalyses the reaction S-sulfanyl-L-cysteinyl-[protein] + uridine(34) in tRNA + AH2 + ATP = 2-thiouridine(34) in tRNA + L-cysteinyl-[protein] + A + AMP + diphosphate + H(+). Catalyzes the 2-thiolation of uridine at the wobble position (U34) of tRNA, leading to the formation of s(2)U34. This Koribacter versatilis (strain Ellin345) protein is tRNA-specific 2-thiouridylase MnmA.